The following is a 277-amino-acid chain: Release factor glutamine methyltransferase (277 aa).

Residues 117–121 (GTGCG), Asp-140, Trp-168, and Asn-182 contribute to the S-adenosyl-L-methionine site. Residue 182–185 (NPPY) participates in substrate binding.

This sequence belongs to the protein N5-glutamine methyltransferase family. PrmC subfamily.

It carries out the reaction L-glutaminyl-[peptide chain release factor] + S-adenosyl-L-methionine = N(5)-methyl-L-glutaminyl-[peptide chain release factor] + S-adenosyl-L-homocysteine + H(+). Methylates the class 1 translation termination release factors RF1/PrfA and RF2/PrfB on the glutamine residue of the universally conserved GGQ motif. In Buchnera aphidicola subsp. Acyrthosiphon pisum (strain APS) (Acyrthosiphon pisum symbiotic bacterium), this protein is Release factor glutamine methyltransferase.